Consider the following 213-residue polypeptide: Transcription antitermination protein NusB (213 aa).

It belongs to the NusB family.

In terms of biological role, involved in transcription antitermination. Required for transcription of ribosomal RNA (rRNA) genes. Binds specifically to the boxA antiterminator sequence of the ribosomal RNA (rrn) operons. This is Transcription antitermination protein NusB from Synechococcus elongatus (strain ATCC 33912 / PCC 7942 / FACHB-805) (Anacystis nidulans R2).